The chain runs to 252 residues: Orotidine 5'-phosphate decarboxylase (252 aa).

Substrate is bound by residues Asp26, Lys48, 75-84 (DLKFHDIPNT), Thr135, Arg196, Gln205, Gly225, and Arg226. Lys77 (proton donor) is an active-site residue.

This sequence belongs to the OMP decarboxylase family. Type 1 subfamily. Homodimer.

The enzyme catalyses orotidine 5'-phosphate + H(+) = UMP + CO2. It participates in pyrimidine metabolism; UMP biosynthesis via de novo pathway; UMP from orotate: step 2/2. In terms of biological role, catalyzes the decarboxylation of orotidine 5'-monophosphate (OMP) to uridine 5'-monophosphate (UMP). The polypeptide is Orotidine 5'-phosphate decarboxylase (Sodalis glossinidius (strain morsitans)).